We begin with the raw amino-acid sequence, 339 residues long: Ornithine carbamoyltransferase, catabolic (339 aa).

Carbamoyl phosphate contacts are provided by residues 57-60 (STRT), Q84, R108, and 135-138 (HPTQ). L-ornithine is bound by residues N167, D231, and 235–236 (SM). Residues 274 to 275 (CL) and R319 contribute to the carbamoyl phosphate site.

The protein belongs to the aspartate/ornithine carbamoyltransferase superfamily. OTCase family.

It is found in the cytoplasm. The enzyme catalyses carbamoyl phosphate + L-ornithine = L-citrulline + phosphate + H(+). Its pathway is amino-acid degradation; L-arginine degradation via ADI pathway; carbamoyl phosphate from L-arginine: step 2/2. Its function is as follows. Reversibly catalyzes the transfer of the carbamoyl group from carbamoyl phosphate (CP) to the N(epsilon) atom of ornithine (ORN) to produce L-citrulline. The polypeptide is Ornithine carbamoyltransferase, catabolic (arcB) (Enterococcus faecalis (strain ATCC 700802 / V583)).